The following is a 38-amino-acid chain: Bacteriocin curvaticin FS47 (38 aa).

The protein resides in the secreted. Functionally, bacteriocin active against Listeria monocytogenes, Pediococcus, Enterococcus, Lactobacilli and Bacilli. This Latilactobacillus curvatus (Lactobacillus curvatus) protein is Bacteriocin curvaticin FS47.